The following is a 621-amino-acid chain: TOX high mobility group box family member 4 (621 aa).

Disordered stretches follow at residues 153–227 and 305–333; these read LGLS…QKPV and LDPAPPSQTPSPPPMATVDPASPAPASIE. T176 carries the post-translational modification Phosphothreonine. Phosphoserine is present on residues S178, S181, and S182. Residues 183 to 193 show a composition bias toward basic and acidic residues; that stretch reads LHEDGVEDFRR. Positions 208 to 218 are enriched in basic residues; that stretch reads KQKAPKKRKKK. The Nuclear localization signal motif lies at 213-218; it reads KKRKKK. A DNA-binding region (HMG box) is located at residues 223-291; that stretch reads PQKPVSAYAL…EYLKALAAYK (69 aa). The segment covering 307–319 has biased composition (pro residues); sequence PAPPSQTPSPPPM. T313 is subject to Phosphothreonine. S315 is modified (phosphoserine). Positions 320–333 are enriched in low complexity; that stretch reads ATVDPASPAPASIE. Position 481 is an asymmetric dimethylarginine (R481). Residues 510–529 form a disordered region; that stretch reads PTVESSPERPMNNSPEAHTV. A phosphoserine mark is found at S533, S550, S552, S560, S562, and S567.

Component of the PNUTS-PP1 phosphatase complex, composed of PPP1R10/PNUTS, TOX4, WDR82 and PPP1CA or PPP1CB or PPP1CC. Interacts with PPP1R10/PNUTS. Interacts with FOXO1 and CREB1 (increased by cAMP); FOXO1 and CREB1 are required for full induction of TOX4-dependent activity and the interactions are inhibited by insulin.

It localises to the nucleus. The protein resides in the chromosome. In liver, recruited to target gene promoters following treatment with dexamethasone and cAMP. Binding is decreased in presence of insulin. Transcription factor that modulates cell fate reprogramming from the somatic state to the pluripotent and neuronal fate. In liver, controls the expression of hormone-regulated gluconeogenic genes such as G6PC1 and PCK1. This regulation is independent of the insulin receptor activation. Also acts as a regulatory component of protein phosphatase 1 (PP1) complexes. Component of the PNUTS-PP1 protein phosphatase complex, a PP1 complex that regulates RNA polymerase II transcription pause-release. PNUTS-PP1 also plays a role in the control of chromatin structure and cell cycle progression during the transition from mitosis into interphase. The protein is TOX high mobility group box family member 4 (TOX4) of Pongo abelii (Sumatran orangutan).